Here is a 303-residue protein sequence, read N- to C-terminus: Mevalonate kinase (303 aa).

Residue 90-100 participates in ATP binding; that stretch reads PAGSGLGSSAA. Asp-141 acts as the Proton acceptor in catalysis.

The protein belongs to the GHMP kinase family. Mevalonate kinase subfamily. As to quaternary structure, homodimer. Requires Mg(2+) as cofactor.

Its subcellular location is the cytoplasm. The catalysed reaction is (R)-mevalonate + ATP = (R)-5-phosphomevalonate + ADP + H(+). It functions in the pathway isoprenoid biosynthesis; isopentenyl diphosphate biosynthesis via mevalonate pathway; isopentenyl diphosphate from (R)-mevalonate: step 1/3. Catalyzes the phosphorylation of (R)-mevalonate (MVA) to (R)-mevalonate 5-phosphate (MVAP). Functions in the mevalonate (MVA) pathway leading to isopentenyl diphosphate (IPP), a key precursor for the biosynthesis of isoprenoid compounds such as archaeal membrane lipids. This chain is Mevalonate kinase, found in Methanothermobacter thermautotrophicus (strain ATCC 29096 / DSM 1053 / JCM 10044 / NBRC 100330 / Delta H) (Methanobacterium thermoautotrophicum).